A 244-amino-acid polypeptide reads, in one-letter code: Mannose-binding protein C (244 aa).

The signal sequence occupies residues 1–18 (MSLFTSFLLLCVLTAVYA). Positions 38 to 96 (GLNGFPGKDGHDGAKGEKGEPGQGLRGLQGPPGKVGPAGPPGNPGSKGATGPKGDRGES) constitute a Collagen-like domain. At P43 the chain carries 4-hydroxyproline. The tract at residues 43–99 (PGKDGHDGAKGEKGEPGQGLRGLQGPPGKVGPAGPPGNPGSKGATGPKGDRGESVEF) is disordered. Residues 45 to 57 (KDGHDGAKGEKGE) show a composition bias toward basic and acidic residues. 4 positions are modified to 4-hydroxyproline: P58, P69, P78, and P81. The span at 65–74 (LQGPPGKVGP) shows a compositional bias: low complexity. A coiled-coil region spans residues 108–126 (IAALRSELRAMRKWVLLSM). One can recognise a C-type lectin domain in the interval 129-241 (NVGKKYFMSS…CSDSFLVVCE (113 aa)). 2 cysteine pairs are disulfide-bonded: C151–C240 and C218–C232.

Oligomeric complex of 3 or more homotrimers. Interacts with MASP1 and MASP2. Interacts with MEP1A and MEP1B and may inhibit their catalytic activity.

The protein resides in the secreted. Functionally, calcium-dependent lectin involved in innate immune defense. Binds mannose, fucose and N-acetylglucosamine on different microorganisms and activates the lectin complement pathway. Binds to late apoptotic cells, as well as to apoptotic blebs and to necrotic cells, but not to early apoptotic cells, facilitating their uptake by macrophages. The sequence is that of Mannose-binding protein C (Mbl2) from Rattus norvegicus (Rat).